The following is a 427-amino-acid chain: Enolase (427 aa).

A (2R)-2-phosphoglycerate-binding site is contributed by glutamine 162. Glutamate 204 functions as the Proton donor in the catalytic mechanism. Mg(2+) contacts are provided by aspartate 241, glutamate 282, and aspartate 309. Residues lysine 334, arginine 363, serine 364, and lysine 385 each contribute to the (2R)-2-phosphoglycerate site. Lysine 334 serves as the catalytic Proton acceptor.

This sequence belongs to the enolase family. The cofactor is Mg(2+).

The protein resides in the cytoplasm. The protein localises to the secreted. It is found in the cell surface. The enzyme catalyses (2R)-2-phosphoglycerate = phosphoenolpyruvate + H2O. It functions in the pathway carbohydrate degradation; glycolysis; pyruvate from D-glyceraldehyde 3-phosphate: step 4/5. Its function is as follows. Catalyzes the reversible conversion of 2-phosphoglycerate (2-PG) into phosphoenolpyruvate (PEP). It is essential for the degradation of carbohydrates via glycolysis. The sequence is that of Enolase from Frankia alni (strain DSM 45986 / CECT 9034 / ACN14a).